Consider the following 167-residue polypeptide: Ribosome maturation factor RimM (167 aa).

The 73-residue stretch at 94 to 166 folds into the PRC barrel domain; the sequence is TGRAYLHELI…YMVVPRFDEF (73 aa).

This sequence belongs to the RimM family. As to quaternary structure, binds ribosomal protein uS19.

It localises to the cytoplasm. In terms of biological role, an accessory protein needed during the final step in the assembly of 30S ribosomal subunit, possibly for assembly of the head region. Essential for efficient processing of 16S rRNA. May be needed both before and after RbfA during the maturation of 16S rRNA. It has affinity for free ribosomal 30S subunits but not for 70S ribosomes. This is Ribosome maturation factor RimM from Chlorobium phaeobacteroides (strain DSM 266 / SMG 266 / 2430).